The sequence spans 154 residues: 3-hydroxyacyl-[acyl-carrier-protein] dehydratase FabZ (154 aa).

Histidine 55 is a catalytic residue.

It belongs to the thioester dehydratase family. FabZ subfamily.

It localises to the cytoplasm. It catalyses the reaction a (3R)-hydroxyacyl-[ACP] = a (2E)-enoyl-[ACP] + H2O. Involved in unsaturated fatty acids biosynthesis. Catalyzes the dehydration of short chain beta-hydroxyacyl-ACPs and long chain saturated and unsaturated beta-hydroxyacyl-ACPs. The polypeptide is 3-hydroxyacyl-[acyl-carrier-protein] dehydratase FabZ (Nitratidesulfovibrio vulgaris (strain DSM 19637 / Miyazaki F) (Desulfovibrio vulgaris)).